A 500-amino-acid polypeptide reads, in one-letter code: L-arabinose isomerase (500 aa).

The Mn(2+) site is built by glutamate 306, glutamate 333, histidine 350, and histidine 450.

Belongs to the arabinose isomerase family. In terms of assembly, homohexamer. Mn(2+) serves as cofactor.

The catalysed reaction is beta-L-arabinopyranose = L-ribulose. Its pathway is carbohydrate degradation; L-arabinose degradation via L-ribulose; D-xylulose 5-phosphate from L-arabinose (bacterial route): step 1/3. Its function is as follows. Catalyzes the conversion of L-arabinose to L-ribulose. The sequence is that of L-arabinose isomerase from Escherichia fergusonii (strain ATCC 35469 / DSM 13698 / CCUG 18766 / IAM 14443 / JCM 21226 / LMG 7866 / NBRC 102419 / NCTC 12128 / CDC 0568-73).